The primary structure comprises 370 residues: 3-isopropylmalate dehydrogenase (370 aa).

Residue 77-90 (GPKWDSVPYEVRPE) coordinates NAD(+). Residues arginine 97, arginine 107, arginine 135, and aspartate 226 each coordinate substrate. Mg(2+)-binding residues include aspartate 226, aspartate 250, and aspartate 254. 290–302 (GSAPDIAGKGIAN) provides a ligand contact to NAD(+).

It belongs to the isocitrate and isopropylmalate dehydrogenases family. LeuB type 1 subfamily. In terms of assembly, homodimer. Mg(2+) is required as a cofactor. Mn(2+) serves as cofactor.

Its subcellular location is the cytoplasm. It carries out the reaction (2R,3S)-3-isopropylmalate + NAD(+) = 4-methyl-2-oxopentanoate + CO2 + NADH. It participates in amino-acid biosynthesis; L-leucine biosynthesis; L-leucine from 3-methyl-2-oxobutanoate: step 3/4. Catalyzes the oxidation of 3-carboxy-2-hydroxy-4-methylpentanoate (3-isopropylmalate) to 3-carboxy-4-methyl-2-oxopentanoate. The product decarboxylates to 4-methyl-2 oxopentanoate. In Rhizobium etli (strain ATCC 51251 / DSM 11541 / JCM 21823 / NBRC 15573 / CFN 42), this protein is 3-isopropylmalate dehydrogenase.